Here is a 185-residue protein sequence, read N- to C-terminus: Ribosome-recycling factor (185 aa).

Belongs to the RRF family.

It localises to the cytoplasm. Responsible for the release of ribosomes from messenger RNA at the termination of protein biosynthesis. May increase the efficiency of translation by recycling ribosomes from one round of translation to another. The sequence is that of Ribosome-recycling factor from Shewanella oneidensis (strain ATCC 700550 / JCM 31522 / CIP 106686 / LMG 19005 / NCIMB 14063 / MR-1).